A 94-amino-acid chain; its full sequence is Large ribosomal subunit protein uL22 (94 aa).

It belongs to the universal ribosomal protein uL22 family. In terms of assembly, part of the 50S ribosomal subunit.

Functionally, this protein binds specifically to 23S rRNA; its binding is stimulated by other ribosomal proteins, e.g. L4, L17, and L20. It is important during the early stages of 50S assembly. It makes multiple contacts with different domains of the 23S rRNA in the assembled 50S subunit and ribosome. Its function is as follows. The globular domain of the protein is located near the polypeptide exit tunnel on the outside of the subunit, while an extended beta-hairpin is found that lines the wall of the exit tunnel in the center of the 70S ribosome. In Tomato big bud phytoplasma, this protein is Large ribosomal subunit protein uL22 (rplV).